We begin with the raw amino-acid sequence, 651 residues long: Acetyl-coenzyme A synthetase (651 aa).

Residues 189-192, T311, and N335 contribute to the CoA site; that span reads RGGK. ATP contacts are provided by residues 387–389, 411–416, D500, and R515; these read GEP and DTWWQT. Residue S523 participates in CoA binding. Residue R526 participates in ATP binding. 3 residues coordinate Mg(2+): V537, H539, and V542. Residue R586 coordinates CoA. K611 is modified (N6-acetyllysine).

The protein belongs to the ATP-dependent AMP-binding enzyme family. The cofactor is Mg(2+). Post-translationally, acetylated. Deacetylation by the SIR2-homolog deacetylase activates the enzyme.

The catalysed reaction is acetate + ATP + CoA = acetyl-CoA + AMP + diphosphate. In terms of biological role, catalyzes the conversion of acetate into acetyl-CoA (AcCoA), an essential intermediate at the junction of anabolic and catabolic pathways. AcsA undergoes a two-step reaction. In the first half reaction, AcsA combines acetate with ATP to form acetyl-adenylate (AcAMP) intermediate. In the second half reaction, it can then transfer the acetyl group from AcAMP to the sulfhydryl group of CoA, forming the product AcCoA. In Brucella abortus (strain S19), this protein is Acetyl-coenzyme A synthetase.